Here is a 400-residue protein sequence, read N- to C-terminus: Glycerol-3-phosphate dehydrogenase [NAD(+)] 1 (400 aa).

NAD(+) is bound by residues 50-55 (GSGNWG), F138, K161, and A194. Position 161 (K161) interacts with substrate. The active-site Proton acceptor is K254. Residues R319 and Q348 each contribute to the NAD(+) site. 319 to 320 (RN) is a substrate binding site.

Belongs to the NAD-dependent glycerol-3-phosphate dehydrogenase family.

The enzyme catalyses sn-glycerol 3-phosphate + NAD(+) = dihydroxyacetone phosphate + NADH + H(+). This chain is Glycerol-3-phosphate dehydrogenase [NAD(+)] 1 (GPD1), found in Candida glabrata (strain ATCC 2001 / BCRC 20586 / JCM 3761 / NBRC 0622 / NRRL Y-65 / CBS 138) (Yeast).